The primary structure comprises 558 residues: REST corepressor spr-1 (558 aa).

The disordered stretch occupies residues 1–106 (MDLYDDDGES…KVKGPLSNTN (106 aa)). Positions 36-56 (TIEENVPEVEENTLLEEDSLV) are enriched in acidic residues. Over residues 69–80 (KPSKSKRKRKRS) the composition is skewed to basic residues. One can recognise an ELM2 domain in the interval 107–192 (KEINVGTEFQ…SAIAEVARRN (86 aa)). The 52-residue stretch at 193 to 244 (ELKDVWTDQEITLFENCYQIFGKNFSQIRSALCHRSLQSIVQFYYESKKRVK) folds into the SANT 1 domain. The GATA-type zinc-finger motif lies at 271-325 (AIFESMCDNCGEKAENMQINNAMNRPECRACLIYFNQTGVPRPTSLRLVLAERIR). Positions 378–402 (CTENGNVGETSSPSAQKTEIQSESD) are enriched in polar residues. Positions 378–406 (CTENGNVGETSSPSAQKTEIQSESDGSGP) are disordered. Positions 481-532 (HYSQDWTQLERSQVIRCFNMYGAHFEHIADVIGTKTPDQVYQFYLENQKAID) constitute an SANT 2 domain.

It belongs to the CoREST family. Probably part of a large repressor complex. Interacts with histone demethylase spr-5/lsd-1.

It localises to the nucleus. In terms of biological role, probable corepressor protein, which probably participates in the transcriptional repression of the presenilin protein hop-1. Probably acts via the formation of a multiprotein complex that deacetylates and demethylates specific sites on histones. Acts redundantly with the transcriptional repressor lin-35 to play a role in vulval morphogenesis and promote germline proliferation. The chain is REST corepressor spr-1 from Caenorhabditis elegans.